Here is a 64-residue protein sequence, read N- to C-terminus: Lantipeptide Flvbeta.d (64 aa).

The propeptide at 1–31 (MDNNTEKFNELAAIADESELNEMLDENITGA) is cleaved by FlvT. Residues 33-37 (STIQC) constitute a cross-link (lanthionine (Ser-Cys); by FlvM2). A 2,3-didehydrobutyrine; by FlvM2 mark is found at Thr34 and Thr41. Cross-links (beta-methyllanthionine (Thr-Cys); by FlvM2) lie at residues 44–52 (TILSVVFDC), 55–58 (TSAC), and 59–62 (TPPC). Positions 47–53 (SVVFDCC) form a cross-link, lanthionine (Ser-Cys); by FlvM2.

Contains LL-lanthionine, DL-lanthionine, and DL-beta-methyllanthionine, when coepressed in E.coli with the flavecin synthetase FlvM2.

The protein localises to the secreted. Its function is as follows. Lanthionine-containing peptide that does probably not show antibacterial activity, since its analog [+2]Flvbeta.d does not show antibacterial activity against M.luteus. Also does not show antibiotic activity when tested with [Del2]Flvalpha.a, an analog of Flvalpha.a, which is encoded by the same operon than Flvbeta.d. The bactericidal activity of lantibiotics is based on depolarization of energized bacterial cytoplasmic membranes, initiated by the formation of aqueous transmembrane pores. The sequence is that of Lantipeptide Flvbeta.d from Ruminococcus flavefaciens.